Consider the following 151-residue polypeptide: Probable cellulase Cel12b (151 aa).

Residues glutamate 50 and glutamate 133 contribute to the active site.

Belongs to the glycosyl hydrolase 12 (cellulase H) family.

Functionally, probable cellulase. Can hydrolyze barley beta-glucan in vitro. Could be important for the survival of M.tuberculosis in the environment, perhaps in amoebal hosts. This Mycobacterium tuberculosis (strain ATCC 25618 / H37Rv) protein is Probable cellulase Cel12b.